Reading from the N-terminus, the 118-residue chain is Heavy metal-associated isoprenylated plant protein 47 (118 aa).

Residues M1–L67 enclose the HMA domain. At C115 the chain carries Cysteine methyl ester. A lipid anchor (S-farnesyl cysteine) is attached at C115. A propeptide spans L116–M118 (removed in mature form).

This sequence belongs to the HIPP family.

Its function is as follows. Heavy-metal-binding protein. This chain is Heavy metal-associated isoprenylated plant protein 47, found in Arabidopsis thaliana (Mouse-ear cress).